The primary structure comprises 265 residues: Imidazole glycerol phosphate synthase subunit HisF (265 aa).

Active-site residues include Asp17 and Asp136.

Belongs to the HisA/HisF family. Heterodimer of HisH and HisF.

Its subcellular location is the cytoplasm. The enzyme catalyses 5-[(5-phospho-1-deoxy-D-ribulos-1-ylimino)methylamino]-1-(5-phospho-beta-D-ribosyl)imidazole-4-carboxamide + L-glutamine = D-erythro-1-(imidazol-4-yl)glycerol 3-phosphate + 5-amino-1-(5-phospho-beta-D-ribosyl)imidazole-4-carboxamide + L-glutamate + H(+). Its pathway is amino-acid biosynthesis; L-histidine biosynthesis; L-histidine from 5-phospho-alpha-D-ribose 1-diphosphate: step 5/9. Its function is as follows. IGPS catalyzes the conversion of PRFAR and glutamine to IGP, AICAR and glutamate. The HisF subunit catalyzes the cyclization activity that produces IGP and AICAR from PRFAR using the ammonia provided by the HisH subunit. In Mycolicibacterium paratuberculosis (strain ATCC BAA-968 / K-10) (Mycobacterium paratuberculosis), this protein is Imidazole glycerol phosphate synthase subunit HisF.